Consider the following 323-residue polypeptide: Thymidylate synthase (323 aa).

DUMP contacts are provided by residues R21 and R172–R173. The active-site Nucleophile is C192. DUMP is bound by residues R214 to D217, N225, and H255 to Y257. D217 is a binding site for (6R)-5,10-methylene-5,6,7,8-tetrahydrofolate. A322 provides a ligand contact to (6R)-5,10-methylene-5,6,7,8-tetrahydrofolate.

It belongs to the thymidylate synthase family. Bacterial-type ThyA subfamily. Homodimer.

Its subcellular location is the cytoplasm. It catalyses the reaction dUMP + (6R)-5,10-methylene-5,6,7,8-tetrahydrofolate = 7,8-dihydrofolate + dTMP. The protein operates within pyrimidine metabolism; dTTP biosynthesis. Its function is as follows. Catalyzes the reductive methylation of 2'-deoxyuridine-5'-monophosphate (dUMP) to 2'-deoxythymidine-5'-monophosphate (dTMP) while utilizing 5,10-methylenetetrahydrofolate (mTHF) as the methyl donor and reductant in the reaction, yielding dihydrofolate (DHF) as a by-product. This enzymatic reaction provides an intracellular de novo source of dTMP, an essential precursor for DNA biosynthesis. In Bordetella parapertussis (strain 12822 / ATCC BAA-587 / NCTC 13253), this protein is Thymidylate synthase.